The following is a 253-amino-acid chain: 3-deoxy-manno-octulosonate cytidylyltransferase (253 aa).

Belongs to the KdsB family.

It is found in the cytoplasm. The enzyme catalyses 3-deoxy-alpha-D-manno-oct-2-ulosonate + CTP = CMP-3-deoxy-beta-D-manno-octulosonate + diphosphate. It participates in nucleotide-sugar biosynthesis; CMP-3-deoxy-D-manno-octulosonate biosynthesis; CMP-3-deoxy-D-manno-octulosonate from 3-deoxy-D-manno-octulosonate and CTP: step 1/1. Its pathway is bacterial outer membrane biogenesis; lipopolysaccharide biosynthesis. Activates KDO (a required 8-carbon sugar) for incorporation into bacterial lipopolysaccharide in Gram-negative bacteria. The sequence is that of 3-deoxy-manno-octulosonate cytidylyltransferase from Neisseria meningitidis serogroup C (strain 053442).